Consider the following 143-residue polypeptide: Large-conductance mechanosensitive channel (143 aa).

The next 2 membrane-spanning stretches (helical) occupy residues 10–30 and 89–109; these read FAVK…GAFS and GSFI…FLMV.

Belongs to the MscL family. As to quaternary structure, homopentamer.

It is found in the cell inner membrane. Its function is as follows. Channel that opens in response to stretch forces in the membrane lipid bilayer. May participate in the regulation of osmotic pressure changes within the cell. This is Large-conductance mechanosensitive channel from Burkholderia multivorans (strain ATCC 17616 / 249).